The primary structure comprises 381 residues: Cobalt-precorrin-5B C(1)-methyltransferase (381 aa).

Belongs to the CbiD family.

It catalyses the reaction Co-precorrin-5B + S-adenosyl-L-methionine = Co-precorrin-6A + S-adenosyl-L-homocysteine. The protein operates within cofactor biosynthesis; adenosylcobalamin biosynthesis; cob(II)yrinate a,c-diamide from sirohydrochlorin (anaerobic route): step 6/10. In terms of biological role, catalyzes the methylation of C-1 in cobalt-precorrin-5B to form cobalt-precorrin-6A. The sequence is that of Cobalt-precorrin-5B C(1)-methyltransferase from Prochlorococcus marinus (strain SARG / CCMP1375 / SS120).